The primary structure comprises 313 residues: Acetaldehyde dehydrogenase (313 aa).

NAD(+) is bound at residue 13 to 16; that stretch reads SGNI. The Acyl-thioester intermediate role is filled by C133. Residues 164–172 and N291 contribute to the NAD(+) site; that span reads SAGPGTRAN.

The protein belongs to the acetaldehyde dehydrogenase family.

It carries out the reaction acetaldehyde + NAD(+) + CoA = acetyl-CoA + NADH + H(+). In Cupriavidus pinatubonensis (strain JMP 134 / LMG 1197) (Cupriavidus necator (strain JMP 134)), this protein is Acetaldehyde dehydrogenase.